Here is a 279-residue protein sequence, read N- to C-terminus: 3-methyl-2-oxobutanoate hydroxymethyltransferase (279 aa).

Mg(2+) contacts are provided by Asp-53 and Asp-92. Residues 53-54 (DS), Asp-92, and Lys-122 each bind 3-methyl-2-oxobutanoate. Glu-124 provides a ligand contact to Mg(2+). Residue Glu-191 is the Proton acceptor of the active site.

The protein belongs to the PanB family. Homodecamer; pentamer of dimers. It depends on Mg(2+) as a cofactor.

The protein resides in the cytoplasm. It carries out the reaction 3-methyl-2-oxobutanoate + (6R)-5,10-methylene-5,6,7,8-tetrahydrofolate + H2O = 2-dehydropantoate + (6S)-5,6,7,8-tetrahydrofolate. Its pathway is cofactor biosynthesis; (R)-pantothenate biosynthesis; (R)-pantoate from 3-methyl-2-oxobutanoate: step 1/2. Its function is as follows. Catalyzes the reversible reaction in which hydroxymethyl group from 5,10-methylenetetrahydrofolate is transferred onto alpha-ketoisovalerate to form ketopantoate. The protein is 3-methyl-2-oxobutanoate hydroxymethyltransferase of Maricaulis maris (strain MCS10) (Caulobacter maris).